The following is a 574-amino-acid chain: MGGLEKKKYERGSATNYITRNKARKKLQLSLPDFRRLCILKGIYPHEPKHKKKVNKGSTAPRTFYLLKDIKFLLHEPIVGKFREYKVFVRRLRKAYGKREWDSVDRIRDNKPSYKLDHIIKERYPTFIDAVRDLDDALSMCFLFSTFPRTGKCHVQTIQLCRRLSVEFLNYVIDSRSLRKVFLSIKGIYYQADILGQTLTWITPYAFSHDHPTDVDYRVMATFTEFYTTLLGFVNFHLYQTLNLQYPPKLDSFSEVDLKSDGEDKYALETEVYMEKLAALSASLSRVIPSEPNDDTEVDEFPADPENAGLEEEQKRQLQEEEKHKSLFVGLKFFLNREVPRDALAFIIRSFGGEVSWDASVCIGATYNSTDPSITHHIVDRPSIQTQIINRYYLQPQWVFDCVNARLLLPVEDYFPGVLLPPHLSPFVHEKEGDYIPPEKLRLMAMQKGENLGLDEEDDDDDDDDEEEDDDDDEEEEDKKLRQLENKKVGQKNLNVKVTAGKVKVEDRTQVAEQEKNEEKRLAIMMMKKKEKYLYNKIMFGKKRKVREANKLALKRKAHDEAVKVERKKKAKKH.

Residues 289 to 312 (PSEPNDDTEVDEFPADPENAGLEE) are disordered. Positions 292–303 (PNDDTEVDEFPA) are enriched in acidic residues. Residues 323–416 (KHKSLFVGLK…LLLPVEDYFP (94 aa)) enclose the BRCT domain. The disordered stretch occupies residues 452-486 (LGLDEEDDDDDDDDEEEDDDDDEEEEDKKLRQLEN). Over residues 453–477 (GLDEEDDDDDDDDEEEDDDDDEEEE) the composition is skewed to acidic residues.

Belongs to the pescadillo family. As to quaternary structure, component of the PeBoW complex, composed of bop1, pes1 and wdr12. The complex is held together by bop1, which interacts with pes1 via its N-terminal domain and with wdr12 via a high-affinity interaction between the seven-bladed beta-propeller domains of the 2 proteins. The PeBoW complex associates with the 66S pre-ribosome.

It is found in the nucleus. The protein resides in the nucleolus. It localises to the nucleoplasm. Its function is as follows. Component of the PeBoW complex, which is required for maturation of 28S and 5.8S ribosomal RNAs and formation of the 60S ribosome. Required for neural crest migration and eye development. This Xenopus laevis (African clawed frog) protein is Pescadillo homolog (pes1).